Consider the following 59-residue polypeptide: Cecropin-C type 2 (59 aa).

Residues 1 to 23 form the signal peptide; it reads MNFAKVFVLVAMAVLLLVGQSEA.

Belongs to the cecropin family.

It is found in the secreted. Its function is as follows. Cecropins have lytic and antibacterial activity against several Gram-positive and Gram-negative bacteria. The sequence is that of Cecropin-C type 2 (CECC2) from Aedes albopictus (Asian tiger mosquito).